The primary structure comprises 297 residues: 4-diphosphocytidyl-2-C-methyl-D-erythritol kinase (297 aa).

The active site involves lysine 6. Residue 94–104 (PVAGGMAGGSA) coordinates ATP. The active site involves aspartate 136.

The protein belongs to the GHMP kinase family. IspE subfamily.

The catalysed reaction is 4-CDP-2-C-methyl-D-erythritol + ATP = 4-CDP-2-C-methyl-D-erythritol 2-phosphate + ADP + H(+). Its pathway is isoprenoid biosynthesis; isopentenyl diphosphate biosynthesis via DXP pathway; isopentenyl diphosphate from 1-deoxy-D-xylulose 5-phosphate: step 3/6. In terms of biological role, catalyzes the phosphorylation of the position 2 hydroxy group of 4-diphosphocytidyl-2C-methyl-D-erythritol. The chain is 4-diphosphocytidyl-2-C-methyl-D-erythritol kinase from Nocardioides sp. (strain ATCC BAA-499 / JS614).